A 174-amino-acid chain; its full sequence is Gamma-crystallin M3 (174 aa).

Beta/gamma crystallin 'Greek key' domains lie at 2-40 (GKIIFYEDRNFQGRSYECSSDCSDMSTYLSRCHSCRVES) and 41-82 (GCFV…RMVP). The connecting peptide stretch occupies residues 83–87 (QYRGP). Beta/gamma crystallin 'Greek key' domains lie at 88 to 128 (YRMR…HVMD) and 129 to 171 (GHWL…RRIM).

It belongs to the beta/gamma-crystallin family. In terms of assembly, monomer.

In terms of biological role, crystallins are the dominant structural components of the vertebrate eye lens. This is Gamma-crystallin M3 from Cyprinus carpio (Common carp).